Reading from the N-terminus, the 155-residue chain is MSRKGSTPQRNVLPDPKYGSETIARFINMVMKSGKKSVAEKIVYGAMNVIGEKNSNAIELLQKALDNVSPAVEVKSRRVGGATYQVPVEVRASRRMALAMRWLIDSSRKRGENSMPRKLAAELLDASESRGGAIKKREETHRMAEANKAFAHYRW.

It belongs to the universal ribosomal protein uS7 family. Part of the 30S ribosomal subunit. Contacts proteins S9 and S11.

Its function is as follows. One of the primary rRNA binding proteins, it binds directly to 16S rRNA where it nucleates assembly of the head domain of the 30S subunit. Is located at the subunit interface close to the decoding center, probably blocks exit of the E-site tRNA. This is Small ribosomal subunit protein uS7 from Xylella fastidiosa (strain M12).